We begin with the raw amino-acid sequence, 414 residues long: MQSWYCPPVPVLPGRGPQLRLYDSADRQVRPVAPGSKATMYVCGITPYDATHLGHAATYVTFDLIHRLWLDLGHELHYVQNITDIDDPLFERADRDGVDWRDLAQAEVALFCEDMAALRVLPPQDYVGATEAIAEMVELIEKMLACGAAYVIDREMGEYQDIYFRADATLQFGYESGYDRDTMLRLCEERGGDPRRPGKSDELDALLWRAARPGEPSWPSPFGPGRPGWHVECAAIALSRIGSGLDIQGGGSDLIFPHHEFTAAHAECVSGERRFARHYVHAGMIGWDGHKMSKSRGNLVLVSALRAQDVEPSAVRLGLLAGHYRADRFWSQQVLDEATARLHRWRTATALPAGPAAVDVVARVRRYLADDLDTPKAIAALDGWVTDAVEYGGHDAGAPKLVATAIDALLGVDL.

Cys43 contributes to the Zn(2+) binding site. Residues 43 to 46 (CGIT), Thr58, and 81 to 83 (NIT) each bind L-cysteinyl-5'-AMP. Positions 45-55 (ITPYDATHLGH) match the 'HIGH' region motif. The short motif at 189–194 (ERGGDP) is the 'ERGGDP' region element. Trp229 serves as a coordination point for L-cysteinyl-5'-AMP. Position 233 (Cys233) interacts with Zn(2+). L-cysteinyl-5'-AMP is bound at residue 251–253 (GSD). Residue His258 coordinates Zn(2+). Residue Ile285 participates in L-cysteinyl-5'-AMP binding. The short motif at 291–295 (KMSKS) is the 'KMSKS' region element.

The protein belongs to the class-I aminoacyl-tRNA synthetase family. MshC subfamily. Monomer. Zn(2+) is required as a cofactor.

The enzyme catalyses 1D-myo-inositol 2-amino-2-deoxy-alpha-D-glucopyranoside + L-cysteine + ATP = 1D-myo-inositol 2-(L-cysteinylamino)-2-deoxy-alpha-D-glucopyranoside + AMP + diphosphate + H(+). Its function is as follows. Catalyzes the ATP-dependent condensation of GlcN-Ins and L-cysteine to form L-Cys-GlcN-Ins. This chain is L-cysteine:1D-myo-inositol 2-amino-2-deoxy-alpha-D-glucopyranoside ligase (mshC), found in Mycobacterium bovis (strain ATCC BAA-935 / AF2122/97).